The chain runs to 517 residues: MFS-type transporter avaJ (517 aa).

Over residues 1 to 12 (MTSPEHSEDERQ) the composition is skewed to basic and acidic residues. A disordered region spans residues 1 to 28 (MTSPEHSEDERQPLLTKPSGPDESQSGF). Residues 40 to 60 (AMWLLPMYTLYAITAGSLIIP) traverse the membrane as a helical segment. N63 carries N-linked (GlcNAc...) asparagine glycosylation. A run of 5 helical transmembrane segments spans residues 103 to 123 (IYGTVLSGILGAIAGPNLMGF), 131 to 151 (PILLISVLGPLIADIIVLAAL), 161 to 181 (WLLVGYAMDGLSGSIITATTA), 204 to 224 (AAFTSAFALGPLIAGGLLSVF), and 230 to 250 (AYWLAFTIHLSLIVLFTLALP). The N-linked (GlcNAc...) asparagine glycan is linked to N265. 5 consecutive transmembrane segments (helical) span residues 299 to 319 (MYIVAVTEAALFGVSMGLVPL), 338 to 358 (FLTGVNLWSILVLVAVVPLFM), 391 to 411 (LLLQVAGYITIAVVHSPLGVI), 442 to 462 (VLLGAVSFLHAISRILLPSGM), and 476 to 496 (ALFALLGFGSGIFLVASMFIG). Residues N497 and N512 are each glycosylated (N-linked (GlcNAc...) asparagine).

The protein belongs to the major facilitator superfamily. TCR/Tet family.

The protein localises to the membrane. The protein operates within secondary metabolite biosynthesis. In terms of biological role, MFS-type transporter; part of the cluster that mediates the biosynthesis of a highly modified cyclo-arginine-tryptophan dipeptide (cRW). The protein is MFS-type transporter avaJ of Aspergillus versicolor.